A 120-amino-acid chain; its full sequence is Large ribosomal subunit protein bL17 (120 aa).

The protein belongs to the bacterial ribosomal protein bL17 family. In terms of assembly, part of the 50S ribosomal subunit. Contacts protein L32.

The protein is Large ribosomal subunit protein bL17 of Mycoplasmopsis pulmonis (strain UAB CTIP) (Mycoplasma pulmonis).